A 613-amino-acid chain; its full sequence is Ribosome-associated molecular chaperone SSB2 (613 aa).

N-acetylalanine is present on Ala-2. The interval 2–391 (AEGVFQGAIG…ILTGQSTSDE (390 aa)) is nucleotide binding domain (NBD). 16 to 18 (TTY) lines the ATP pocket. Thr-47 is modified (phosphothreonine). Residues Lys-73, 205-207 (GGT), 271-278 (ERAKRTLS), and Gly-342 contribute to the ATP site. An inter-domain linker region spans residues 392-402 (TKDLLLLDVAP). Positions 403-613 (LSLGVGMQGD…RVVTKAMSSR (211 aa)) are substrate binding domain (SBD). The Contributes to ribosome binding motif lies at 428 to 430 (KRR). Thr-431 is subject to Phosphothreonine. Positions 516–612 (SEEIEKMVNQ…KRVVTKAMSS (97 aa)) are lid domain (SBDalpha). The Nuclear export signal motif lies at 574 to 582 (IEAALSDAL). Positions 601–613 (GLKRVVTKAMSSR) are required for interaction with ribosomes.

Belongs to the heat shock protein 70 family. Ssb-type Hsp70 subfamily. In terms of assembly, binds to ribosomes. Binds close to the ribosomal tunnel exit via contacts with both ribosomal proteins RPL35, RPL39 and RPL19, and rRNA. Directly interacts with nascent polypeptides. This interaction is dependent on the ribosome-associated complex (RAC). Interacts with SSE1.

Its subcellular location is the cytoplasm. The enzyme catalyses ATP + H2O = ADP + phosphate + H(+). Its function is as follows. Ribosome-bound, Hsp70-type chaperone that assists in the cotranslational folding of newly synthesized proteins in the cytosol. Stimulates folding by interacting with nascent chains, binding to short, largely hydrophobic sequences exposed by unfolded proteins, thereby stabilizing longer, more slowly translated, and aggregation-prone nascent polypeptides and domains that cannot fold stably until fully synthesized. The Hsp70-protein substrate interaction depends on ATP-binding and on allosteric regulation between the NBD and the SBD. The ATP-bound state is characterized by a fast exchange rate of substrate (low affinity state), while in the ADP-bound state exchange is much slower (high affinity state). During the Hsp70 cycle, the chaperone switches between the ATP-bound state (open conformation) and the ADP-bound state (closed conformation) by major conformational rearrangements involving mainly the lid domain. Ssb cooperates with a specific Hsp40/Hsp70 co-chaperone termed the ribosome-associated complex (RAC), which stimulates the ATPase activity of the ribosome-associated pool of Ssbs and switches it to the high affinity substrate binding state. Hsp110 chaperone SSE1 and FES1 act as nucleotide exchange factors that cause substrate release. This chain is Ribosome-associated molecular chaperone SSB2, found in Saccharomyces cerevisiae (strain ATCC 204508 / S288c) (Baker's yeast).